Here is a 330-residue protein sequence, read N- to C-terminus: 4-hydroxythreonine-4-phosphate dehydrogenase (330 aa).

Substrate is bound by residues His-136 and Thr-137. The a divalent metal cation site is built by His-166, His-211, and His-266. The substrate site is built by Lys-274, Asn-283, and Arg-292.

Belongs to the PdxA family. In terms of assembly, homodimer. Zn(2+) serves as cofactor. Requires Mg(2+) as cofactor. The cofactor is Co(2+).

The protein localises to the cytoplasm. It carries out the reaction 4-(phosphooxy)-L-threonine + NAD(+) = 3-amino-2-oxopropyl phosphate + CO2 + NADH. It functions in the pathway cofactor biosynthesis; pyridoxine 5'-phosphate biosynthesis; pyridoxine 5'-phosphate from D-erythrose 4-phosphate: step 4/5. Its function is as follows. Catalyzes the NAD(P)-dependent oxidation of 4-(phosphooxy)-L-threonine (HTP) into 2-amino-3-oxo-4-(phosphooxy)butyric acid which spontaneously decarboxylates to form 3-amino-2-oxopropyl phosphate (AHAP). The chain is 4-hydroxythreonine-4-phosphate dehydrogenase from Serratia proteamaculans (strain 568).